The chain runs to 183 residues: SAYSvFN domain-containing protein 1 (183 aa).

The Cytoplasmic segment spans residues M1 to K105. Residues A11–E36 form a disordered region. The segment covering G16–E36 has biased composition (low complexity). The interval S91–K105 is middle helical (MH). Positions V106–F126 form an intramembrane region, helical. The Cytoplasmic portion of the chain corresponds to V127–R183.

This sequence belongs to the SAYSD1 family. Associates (via N-terminus) with ribosomes.

The protein resides in the endoplasmic reticulum membrane. It is found in the cytoplasmic vesicle membrane. Functionally, ufmylation 'reader' component of a translocation-associated quality control pathway, a mechanism that takes place when a ribosome has stalled during translation, and which is required to degrade clogged substrates. Specifically recognizes and binds ufmylated ribosomes when a ribosome has stalled, promoting the transport of stalled nascent chain via the TRAPP complex to lysosomes for degradation. In Homo sapiens (Human), this protein is SAYSvFN domain-containing protein 1.